The chain runs to 292 residues: 4-hydroxy-tetrahydrodipicolinate synthase (292 aa).

A pyruvate-binding site is contributed by Thr-45. The Proton donor/acceptor role is filled by Tyr-133. Lys-161 functions as the Schiff-base intermediate with substrate in the catalytic mechanism. Ile-203 contacts pyruvate.

The protein belongs to the DapA family. As to quaternary structure, homotetramer; dimer of dimers.

The protein resides in the cytoplasm. It carries out the reaction L-aspartate 4-semialdehyde + pyruvate = (2S,4S)-4-hydroxy-2,3,4,5-tetrahydrodipicolinate + H2O + H(+). Its pathway is amino-acid biosynthesis; L-lysine biosynthesis via DAP pathway; (S)-tetrahydrodipicolinate from L-aspartate: step 3/4. Its function is as follows. Catalyzes the condensation of (S)-aspartate-beta-semialdehyde [(S)-ASA] and pyruvate to 4-hydroxy-tetrahydrodipicolinate (HTPA). The sequence is that of 4-hydroxy-tetrahydrodipicolinate synthase from Nitrosomonas eutropha (strain DSM 101675 / C91 / Nm57).